An 85-amino-acid polypeptide reads, in one-letter code: U4-theraphotoxin-Hhn1a (85 aa).

An N-terminal signal peptide occupies residues 1-22; it reads MKVTLIAILTCAAVLVLHTTAA. A propeptide spanning residues 23–48 is cleaved from the precursor; that stretch reads EELEAEGQLMEVGMPDTELAAVDEER. Disulfide bonds link C52-C66, C56-C77, and C71-C82.

It belongs to the neurotoxin 12 (Hwtx-2) family. 02 (Hwtx-2) subfamily. Monomer. In terms of tissue distribution, expressed by the venom gland.

It localises to the secreted. Its function is as follows. Neurotoxin active on both insects and mammals. This Cyriopagopus hainanus (Chinese bird spider) protein is U4-theraphotoxin-Hhn1a.